The primary structure comprises 481 residues: Serine/threonine-protein kinase US3 (481 aa).

The segment at 12 to 63 (RPDKRQEASVPPETNTAPAFPASTFYTPAEDAYLAPGPPETIHPSRPPSPGE) is disordered. Pro residues predominate over residues 47–61 (PGPPETIHPSRPPSP). One can recognise a Protein kinase domain in the interval 191–478 (FAIHGALIPG…AAELLRLPLF (288 aa)). Residues 197–205 (LIPGSEGCV) and K220 each bind ATP. The active-site Proton acceptor is the D305.

Belongs to the protein kinase superfamily. Ser/Thr protein kinase family. Interacts with host LAT; this interaction prevents LAT activation of TRAF6. Post-translationally, phosphorylated by UL13; this phosphorylation regulates subsequent phosphorylation of UL31 and UL34 by US3. Autophosphorylated.

Its subcellular location is the host cytoplasm. It localises to the host nucleus. It carries out the reaction L-seryl-[protein] + ATP = O-phospho-L-seryl-[protein] + ADP + H(+). The enzyme catalyses L-threonyl-[protein] + ATP = O-phospho-L-threonyl-[protein] + ADP + H(+). Functionally, multifunctional serine/threonine kinase that plays a role in several processes including egress of virus particles from the nucleus, modulation of the actin cytoskeleton and inhibition of host immune response. Phosphorylates UL31 and UL34, two critical regulators of capsid budding from nucleus to endoplasmic reticulum, thereby facilitating virion egress. Modulates and redistributes host components of the nuclear envelope, including LMNA, emerin/EMD and the nuclear matrix protein MATR3. In turn, facilitates nuclear pore impairment and capsid release through impaired nuclear envelope. Phosphorylates envelope glycoprotein B (gB), probably to direct it to the cell surface. Promotes virus intracellular spread by restructuring host cell cytoskeleton. Blocks host apoptosis to extend cell survival and allow efficient viral replication. Promotes viral gene expression by phosphorylating host HDAC2 to reduce viral genome silencing. Strongly inhibits TCR-activated signal transduction in T-cells by reducing the ubiquitination of LAT and TRAF6, leading to a suboptimal activation of LAT. Subverts host antiviral innate immunity by inhibiting type I interferon production through hyperphosphorylation of beta-catenin/CTNNB1. In addition, phosphorylates the RNA sensor RIGI and the transcription factor IRF3 to prevent the RLR-mediated antiviral signaling pathway. Hyperphosphorylates host RELA and thereby dampens NF-kappa-B signaling. Acts as an immunoevasin partly responsible for inhibition of MR1 expression and antigen presentation in response to bacterial infection. The polypeptide is Serine/threonine-protein kinase US3 (US3) (Human herpesvirus 2 (strain HG52) (HHV-2)).